The sequence spans 140 residues: Small ribosomal subunit protein uS11c (140 aa).

It belongs to the universal ribosomal protein uS11 family. As to quaternary structure, part of the 30S ribosomal subunit.

The protein localises to the plastid. The protein resides in the chloroplast. This Pelargonium hortorum (Common geranium) protein is Small ribosomal subunit protein uS11c.